The chain runs to 210 residues: MPKVAILIYSVDDIIATLAENEKKGIEIAGGEAEIFQVPDVSYKTEYATEEGKEAAKVAKTNADFSYKILTRETLVEYDYYLFGIPTKFGNFPAEWKSFWDSNTGGLWAKGSLHGKIAGLFVSGAISGKGDTEMCIMNAMSTLVHHGVIYVPLGYKNAYKELTDVEDVNGSCAWGAGCVSGIDGGRPPSLSELRVHQLQGKAFYDRIKDL.

A Flavodoxin-like domain is found at 4-203 (VAILIYSVDD…RVHQLQGKAF (200 aa)).

Belongs to the WrbA family.

Its subcellular location is the cytoplasm. It localises to the membrane raft. This chain is Protein RFS1 (RFS1), found in Saccharomyces cerevisiae (strain ATCC 204508 / S288c) (Baker's yeast).